Here is a 491-residue protein sequence, read N- to C-terminus: Transcription factor unc-3 (491 aa).

The interval 66 to 69 (RKSN) is interaction with DNA. A C5-type zinc finger spans residues 154-173 (CRVLLTHEVMCSRCCEKKSC). Interaction with DNA regions lie at residues 200 to 207 (NCLKNAGN) and 239 to 242 (NNSK). The tract at residues 240 to 261 (NSKHGRRTKRTDASDDSEYSES) is disordered. The IPT/TIG domain occupies 269-355 (PVIKALFPSE…SRGTPLRFSY (87 aa)).

The protein belongs to the COE family. May homodimerise. Interacts with jmjd-3.1. May interact with GFI1 homolog pag-3.

It is found in the nucleus. Functionally, transcription factor. Involved in motor neuron fate determination and maintenance, acting as an activator of gene expression in a subset of motor neurons. May act in concert with GFI1 homolog pag-3 in motor neuron fate determination. Required to maintain the expression of transcriptional repressors bnc-1 and cfi-1, which play roles in the cell fate of motor neurons. May play a role in the expression of proteins essential for axonal pathfinding and/or neuronal differentiation in both sensory and motor neurons. Cooperates with jmjd-3.1 and wdr-5.1 to ensure robust transdifferentiation of the Y rectal cell to the PDA motor neuron during larval development. In Caenorhabditis elegans, this protein is Transcription factor unc-3 (unc-3).